A 197-amino-acid polypeptide reads, in one-letter code: uncharacterized protein (197 aa).

It belongs to the methyltransferase superfamily.

This is an uncharacterized protein from Mycobacterium bovis (strain ATCC BAA-935 / AF2122/97).